A 125-amino-acid polypeptide reads, in one-letter code: Protein ELF4-LIKE 1 (125 aa).

Positions 1–18 are enriched in polar residues; sequence MEASRNRSLVGNNRSPEM. Residues 1–28 are disordered; the sequence is MEASRNRSLVGNNRSPEMNENDGEDVAA.

It belongs to the EARLY FLOWERING 4 family. In terms of assembly, homodimer.

It is found in the nucleus. In terms of biological role, component of the central CCA1/LHY-TOC1 feedback loop in the circadian clock that promotes clock accuracy and is required for sustained rhythms in the absence of daily light/dark cycles. This is Protein ELF4-LIKE 1 (EFL1) from Arabidopsis thaliana (Mouse-ear cress).